A 698-amino-acid chain; its full sequence is Testis-specific gene 10 protein (698 aa).

S163 bears the Phosphoserine mark. The tract at residues 556-689 (QMANERISMQ…SPDRGLDRSL (134 aa)) is interaction with HIF1A. Polar residues predominate over residues 659-670 (HMSSTMKPNTKC). Residues 659–685 (HMSSTMKPNTKCHSPERAHHRSPDRGL) are disordered. Residues 671-685 (HSPERAHHRSPDRGL) are compositionally biased toward basic and acidic residues. S688 is modified (phosphoserine).

Belongs to the CEP135/TSGA10 family. As to quaternary structure, interacts with HIF1A. In terms of processing, processed into N-terminal 27-kDa and C-terminal 55-kDa fragments. As to expression, expressed in the testis, in spermatozoa (at protein level). Expressed in actively dividing fetal tissues, including sternum, intestine, limb, kidney and stomach.

It localises to the cytoplasm. Its subcellular location is the cytoskeleton. It is found in the microtubule organizing center. The protein localises to the centrosome. The protein resides in the centriole. Functionally, plays a role in spermatogenesis. When overexpressed, prevents nuclear localization of HIF1A. The sequence is that of Testis-specific gene 10 protein (TSGA10) from Homo sapiens (Human).